Consider the following 263-residue polypeptide: Flagellar L-ring protein (263 aa).

The signal sequence occupies residues M1–G15. Residue C16 is the site of N-palmitoyl cysteine attachment. Residue C16 is the site of S-diacylglycerol cysteine attachment. A disordered region spans residues K123 to G143.

The protein belongs to the FlgH family. The basal body constitutes a major portion of the flagellar organelle and consists of four rings (L,P,S, and M) mounted on a central rod.

The protein resides in the cell outer membrane. Its subcellular location is the bacterial flagellum basal body. Its function is as follows. Assembles around the rod to form the L-ring and probably protects the motor/basal body from shearing forces during rotation. This Aliivibrio fischeri (strain ATCC 700601 / ES114) (Vibrio fischeri) protein is Flagellar L-ring protein.